The chain runs to 339 residues: Phenylalanine--tRNA ligase alpha subunit (339 aa).

Glutamate 250 contacts Mg(2+).

This sequence belongs to the class-II aminoacyl-tRNA synthetase family. Phe-tRNA synthetase alpha subunit type 1 subfamily. As to quaternary structure, tetramer of two alpha and two beta subunits. It depends on Mg(2+) as a cofactor.

Its subcellular location is the cytoplasm. The catalysed reaction is tRNA(Phe) + L-phenylalanine + ATP = L-phenylalanyl-tRNA(Phe) + AMP + diphosphate + H(+). This is Phenylalanine--tRNA ligase alpha subunit from Christiangramia forsetii (strain DSM 17595 / CGMCC 1.15422 / KT0803) (Gramella forsetii).